A 393-amino-acid chain; its full sequence is Phosphoglycerate kinase (393 aa).

Substrate is bound by residues 21-23 (DLN), Arg37, 60-63 (HLGR), Arg115, and Arg148. Residues Lys199, Glu321, and 347–350 (GGDT) each bind ATP.

This sequence belongs to the phosphoglycerate kinase family. Monomer.

It is found in the cytoplasm. It catalyses the reaction (2R)-3-phosphoglycerate + ATP = (2R)-3-phospho-glyceroyl phosphate + ADP. It functions in the pathway carbohydrate degradation; glycolysis; pyruvate from D-glyceraldehyde 3-phosphate: step 2/5. The polypeptide is Phosphoglycerate kinase (Dechloromonas aromatica (strain RCB)).